We begin with the raw amino-acid sequence, 142 residues long: MKNVSPRRNKHYKSYKPQVPLKKPVLLPQHPPYRNRRKKKYQQNKYFPDFTFLLSYPVIKIRKVALKKLQKLPHKNDFNLANSLQNCQLGQNATNLILLLLFSLDHYTPLILNLAFSLTDFSKSSNCFINLSKVYPPLKPFP.

Over residues M1 to S14 the composition is skewed to basic residues. A disordered region spans residues M1–K40. The segment covering K16–P28 has biased composition (low complexity).

This is an uncharacterized protein from Aquifex aeolicus (strain VF5).